The chain runs to 907 residues: Avirulence protein A (907 aa).

2 stretches are compositionally biased toward polar residues: residues 1 to 11 and 124 to 136; these read MWNVSKSSNNL and AGSN…SSDP. 2 disordered regions span residues 1-47 and 116-157; these read MWNV…HDQL and NDDF…KKSY.

In Pseudomonas savastanoi pv. glycinea (Pseudomonas syringae pv. glycinea), this protein is Avirulence protein A (avrA).